A 673-amino-acid polypeptide reads, in one-letter code: Vasorin (673 aa).

An N-terminal signal peptide occupies residues 1–23 (MCSRVPLLLPLLLLLALGPGVQG). The LRRNT domain maps to 24-51 (CPSGCQCSQPQTVFCTARQGTTVPRDVP). The Extracellular portion of the chain corresponds to 24-575 (CPSGCQCSQP…VTQAREGNLP (552 aa)). LRR repeat units follow at residues 52 to 74 (PDTV…SFAG), 77 to 98 (GLQL…VFQP), 101 to 122 (NLSN…TFRG), 125 to 146 (RLER…AFDT), 149 to 170 (RLLE…RLPR), 171 to 191 (LLLL…ILDT), 193 to 214 (NVEA…LFSR), 217 to 238 (NLHD…IRGL), 240 to 262 (GLTR…DLAG), and 265 to 287 (ALQE…SGLF). N-linked (GlcNAc...) asparagine glycosylation is present at N101. N117 carries N-linked (GlcNAc...) (complex) asparagine glycosylation. A glycan (N-linked (GlcNAc...) asparagine) is linked at N273. The 54-residue stretch at 298-351 (NPFNCVCPLSWFGPWVRESHVTLASPEETRCHFPPKNAGRLLLELDYADFGCPA) folds into the LRRCT domain. A compositionally biased stretch (low complexity) spans 358–370 (VPTTRPVVREPTA). The segment at 358-404 (VPTTRPVVREPTALSSSLAPTWLSPTEPATEAPSPPSTAPPTVGPVP) is disordered. The span at 390-404 (PSPPSTAPPTVGPVP) shows a compositional bias: pro residues. The EGF-like domain occupies 405–442 (QPQDCPPSTCLNGGTCHLGTRHHLACLCPEGFTGLYCE). Disulfide bonds link C409/C420, C414/C430, and C432/C441. In terms of domain architecture, Fibronectin type-III spans 460 to 558 (PPRSLTLGIE…ACGEAHTPPA (99 aa)). N-linked (GlcNAc...) asparagine glycosylation is found at N500 and N528. A helical transmembrane segment spans residues 576 to 596 (LLIAPALAAVLLAALAAVGAA). The Cytoplasmic segment spans residues 597 to 673 (YCVRRGRAMA…QSPLHAKPYI (77 aa)).

In terms of assembly, interacts with TGFB1, TGFB2 and TGFB3. Post-translationally, N-glycosylated. N-glycan heterogeneity at Asn-117: Hex5HexNAc4 (minor), dHex1Hex5HexNAc4 (major), Hex6HexNAc5 (minor) and dHex1Hex6HexNAc5 (minor). Expressed at highest levels in aorta, at intermediate levels in kidney and placenta and at lowest levels in brain, heart, liver, lung and skeletal muscle. Within the aorta, the strongest expression is found in the tunica media of the proximal ascending aorta, the descending thoracic aorta, the abdominal aorta and the coronary arteries. Within the kidney, expression is found in the interstitial cells.

It localises to the membrane. The protein localises to the secreted. Functionally, may act as an inhibitor of TGF-beta signaling. The chain is Vasorin (VASN) from Homo sapiens (Human).